Here is a 386-residue protein sequence, read N- to C-terminus: Alcohol dehydrogenase-like 2 (386 aa).

Residues Cys51, Thr53, His74, Cys104, Cys107, Cys110, Cys118, and Cys183 each contribute to the Zn(2+) site. Residues Thr53 and His74 each coordinate an alcohol. Thr53 provides a ligand contact to NAD(+). NAD(+)-binding positions include 208–213, Asp232, Lys237, 302–304, Phe329, and Arg379; these read GLGAVG and LGM.

It belongs to the zinc-containing alcohol dehydrogenase family. Class-III subfamily. As to quaternary structure, homodimer. The cofactor is Zn(2+).

The protein localises to the cytoplasm. The enzyme catalyses a primary alcohol + NAD(+) = an aldehyde + NADH + H(+). It catalyses the reaction a secondary alcohol + NAD(+) = a ketone + NADH + H(+). This Arabidopsis thaliana (Mouse-ear cress) protein is Alcohol dehydrogenase-like 2.